Here is a 345-residue protein sequence, read N- to C-terminus: MADRIHWTVGLAQTLFDKPLLELLFEAQTVHRQHFDPRQVQVSTLLSIKTGACPEDCKYCPQSSRYKTGLESERLMQVEQVLESARKAKANGSTRFCMGAAWKNPHERDMPYLQQMVQGVKAMGMETCMTLGTLDGTQAERLADAGLDYYNHNLDTSPEFYGNIITTRSYQERLDTLGKVRGAGIKVCSGGIVGLGETVRDRAGLLVQLANLPTPPESVPINMLVKVKGTPLADNEDVDPFDFIRTIAVARIMMPASYVRLSAGREQMNEQTQAMCFMAGANSIFYGCKLLTTPNPEEDKDLQLFRKLGLNPQQTETEHGDNQQQQALAAQLMQADTAEFYNAAL.

The Radical SAM core domain occupies 38–256; that stretch reads RQVQVSTLLS…IAVARIMMPA (219 aa). The [4Fe-4S] cluster site is built by C53, C57, and C60. Residues C97, C128, C188, and R260 each coordinate [2Fe-2S] cluster.

Belongs to the radical SAM superfamily. Biotin synthase family. In terms of assembly, homodimer. Requires [4Fe-4S] cluster as cofactor. The cofactor is [2Fe-2S] cluster.

The catalysed reaction is (4R,5S)-dethiobiotin + (sulfur carrier)-SH + 2 reduced [2Fe-2S]-[ferredoxin] + 2 S-adenosyl-L-methionine = (sulfur carrier)-H + biotin + 2 5'-deoxyadenosine + 2 L-methionine + 2 oxidized [2Fe-2S]-[ferredoxin]. It functions in the pathway cofactor biosynthesis; biotin biosynthesis; biotin from 7,8-diaminononanoate: step 2/2. Functionally, catalyzes the conversion of dethiobiotin (DTB) to biotin by the insertion of a sulfur atom into dethiobiotin via a radical-based mechanism. The protein is Biotin synthase of Serratia proteamaculans (strain 568).